The primary structure comprises 622 residues: Low affinity potassium transport system protein Kup (622 aa).

Helical transmembrane passes span 9 to 29 (LPAITLAAIGVVYGDIGTSPL), 49 to 69 (VFGFLSLIFWLLIFVVSIKYL), 103 to 123 (VIMGLIGGSFFYGEVVITPAI), 137 to 157 (PQLDTWIVPLSIIVLTLLFMI), 165 to 185 (VGQLFAPIMLTWFLILAGLGL), 213 to 233 (VSFIALGAVVLSITGVEALYA), 247 to 267 (WFTVVLPSLTLNYFGQGALLL), 276 to 296 (PFFLLAPDWALIPLLIIAALA), 337 to 357 (IYIPFVNWMLYVAVVIVIVSF), 363 to 383 (LAAAYGIAVTGTMVLTSILST), 396 to 416 (FVALILIAFLCVDIPLFTANL), and 419 to 439 (LLSGGWLPLSLGTVMFIVMTT).

It belongs to the HAK/KUP transporter (TC 2.A.72) family.

It is found in the cell inner membrane. It catalyses the reaction K(+)(in) + H(+)(in) = K(+)(out) + H(+)(out). In terms of biological role, responsible for the low-affinity transport of potassium into the cell. Likely operates as a K(+):H(+) symporter. This Escherichia coli O6:K15:H31 (strain 536 / UPEC) protein is Low affinity potassium transport system protein Kup.